The sequence spans 115 residues: Large ribosomal subunit protein bL20c (115 aa).

It belongs to the bacterial ribosomal protein bL20 family.

It is found in the plastid. Its subcellular location is the chloroplast. Binds directly to 23S ribosomal RNA and is necessary for the in vitro assembly process of the 50S ribosomal subunit. It is not involved in the protein synthesizing functions of that subunit. This chain is Large ribosomal subunit protein bL20c, found in Pyropia yezoensis (Susabi-nori).